A 63-amino-acid chain; its full sequence is 2-hydroxymuconate tautomerase (63 aa).

The Proton acceptor; via imino nitrogen role is filled by P2.

The protein belongs to the 4-oxalocrotonate tautomerase family. In terms of assembly, homohexamer.

It carries out the reaction (2Z,4E)-2-hydroxyhexa-2,4-dienedioate = (3E)-2-oxohex-3-enedioate. The protein operates within xenobiotic degradation; toluene degradation. Its pathway is xenobiotic degradation; xylene degradation. In terms of biological role, catalyzes the ketonization of 2-hydroxymuconate stereoselectively to yield 2-oxo-3-hexenedioate. This chain is 2-hydroxymuconate tautomerase (xylH), found in Pseudomonas putida (Arthrobacter siderocapsulatus).